A 1069-amino-acid chain; its full sequence is Carbamoyl phosphate synthase large chain (1069 aa).

The tract at residues 1-401 (MPLNKDIKRV…AFLKGIRSLE (401 aa)) is carboxyphosphate synthetic domain. ATP is bound by residues R129, R169, G175, G176, K208, V210, E215, G241, I242, H243, Q284, and E298. Residues 133-327 (RDMMNRIGEP…IAKLAAKIAL (195 aa)) enclose the ATP-grasp 1 domain. Mg(2+) is bound by residues Q284, E298, and N300. Residues Q284, E298, and N300 each contribute to the Mn(2+) site. Residues 402–549 (IGKYSLDHKK…YSTYEQYDEV (148 aa)) are oligomerization domain. The carbamoyl phosphate synthetic domain stretch occupies residues 550–932 (EVSNRRKVIV…ALYKGFVGAN (383 aa)). The 191-residue stretch at 674 to 864 (DELLERLDIS…IVDIATQVML (191 aa)) folds into the ATP-grasp 2 domain. Residues R710, K749, L751, E755, G780, V781, H782, S783, Q823, and E835 each coordinate ATP. Mg(2+) is bound by residues Q823, E835, and N837. Mn(2+)-binding residues include Q823, E835, and N837. Residues 932-1069 (NMYPSKEKGK…KDLEVFDITK (138 aa)) enclose the MGS-like domain. The interval 933-1069 (MYPSKEKGKI…KDLEVFDITK (137 aa)) is allosteric domain.

The protein belongs to the CarB family. In terms of assembly, composed of two chains; the small (or glutamine) chain promotes the hydrolysis of glutamine to ammonia, which is used by the large (or ammonia) chain to synthesize carbamoyl phosphate. Tetramer of heterodimers (alpha,beta)4. It depends on Mg(2+) as a cofactor. Requires Mn(2+) as cofactor.

The enzyme catalyses hydrogencarbonate + L-glutamine + 2 ATP + H2O = carbamoyl phosphate + L-glutamate + 2 ADP + phosphate + 2 H(+). It carries out the reaction hydrogencarbonate + NH4(+) + 2 ATP = carbamoyl phosphate + 2 ADP + phosphate + 2 H(+). The protein operates within amino-acid biosynthesis; L-arginine biosynthesis; carbamoyl phosphate from bicarbonate: step 1/1. Its pathway is pyrimidine metabolism; UMP biosynthesis via de novo pathway; (S)-dihydroorotate from bicarbonate: step 1/3. In terms of biological role, large subunit of the glutamine-dependent carbamoyl phosphate synthetase (CPSase). CPSase catalyzes the formation of carbamoyl phosphate from the ammonia moiety of glutamine, carbonate, and phosphate donated by ATP, constituting the first step of 2 biosynthetic pathways, one leading to arginine and/or urea and the other to pyrimidine nucleotides. The large subunit (synthetase) binds the substrates ammonia (free or transferred from glutamine from the small subunit), hydrogencarbonate and ATP and carries out an ATP-coupled ligase reaction, activating hydrogencarbonate by forming carboxy phosphate which reacts with ammonia to form carbamoyl phosphate. This Clostridium botulinum (strain Alaska E43 / Type E3) protein is Carbamoyl phosphate synthase large chain.